The chain runs to 378 residues: SPbeta prophage-derived uncharacterized protein YorJ (378 aa).

The polypeptide is SPbeta prophage-derived uncharacterized protein YorJ (yorJ) (Bacillus subtilis (strain 168)).